Reading from the N-terminus, the 525-residue chain is Estrogen receptor (525 aa).

The tract at residues 1-59 (PTSPLVFVPSSPRLSPFMHPPSHHYLETTSTPVYRSSVSSSQQQLSREDQCGTSDDSYS) is disordered. The tract at residues 1–82 (PTSPLVFVPS…GFEMAKEMRF (82 aa)) is modulating. Over residues 36-45 (SSVSSSQQQL) the composition is skewed to low complexity. 2 NR C4-type zinc fingers span residues 83–103 (CAVC…CEGC) and 119–143 (CPAT…LRKC). The segment at residues 83-148 (CAVCSDYASG…RLRKCYQVGM (66 aa)) is a DNA-binding region (nuclear receptor). The segment at 149-209 (MKGGVRKDRG…GGGKSSIIGM (61 aa)) is hinge. A compositionally biased stretch (basic and acidic residues) spans 154–182 (RKDRGRVLRRDKRRTGTSDKASKDLEHRT). Residues 154 to 203 (RKDRGRVLRRDKRRTGTSDKASKDLEHRTAPPQDRRKHSSSSSSAGGGGK) are disordered. The region spanning 210–446 (SPDQVLLLLQ…DLLLEMLDAH (237 aa)) is the NR LBD domain. Residues 452 to 465 (DRPAESWSQADREP) show a composition bias toward basic and acidic residues. Residues 452–525 (DRPAESWSQA…GPRSDCTHIL (74 aa)) form a disordered region. Positions 479–493 (SGGGDGGPSSAGSGS) are enriched in gly residues.

Belongs to the nuclear hormone receptor family. NR3 subfamily. Binds DNA as a homodimer. Can form a heterodimer with ER-beta. In terms of tissue distribution, abundant in the liver, less abundant in the testes and barely detectable in the ovary and brain.

The protein localises to the nucleus. Functionally, the steroid hormones and their receptors are involved in the regulation of eukaryotic gene expression and affect cellular proliferation and differentiation in target tissues. The sequence is that of Estrogen receptor (esr1) from Micropogonias undulatus (Atlantic croaker).